The primary structure comprises 327 residues: Ribonucleoside-diphosphate reductase small chain (327 aa).

Positions 70, 101, and 104 each coordinate Fe cation. The active site involves Tyr108. Fe cation is bound by residues Glu164, Glu198, and His201.

The protein belongs to the ribonucleoside diphosphate reductase small chain family. As to quaternary structure, heterotetramer composed of a homodimer of the large subunit (R1) and a homodimer of the small subunit (R2). Larger multisubunit protein complex are also active, composed of (R1)n(R2)n. The cofactor is Fe cation.

It carries out the reaction a 2'-deoxyribonucleoside 5'-diphosphate + [thioredoxin]-disulfide + H2O = a ribonucleoside 5'-diphosphate + [thioredoxin]-dithiol. Ribonucleoside-diphosphate reductase holoenzyme provides the precursors necessary for viral DNA synthesis. Allows virus growth in non-dividing cells. Catalyzes the biosynthesis of deoxyribonucleotides from the corresponding ribonucleotides. This is Ribonucleoside-diphosphate reductase small chain from African swine fever virus (isolate Tick/South Africa/Pretoriuskop Pr4/1996) (ASFV).